The following is a 480-amino-acid chain: Sestrin-2 (480 aa).

N-acetylmethionine is present on M1. The disordered stretch occupies residues 20–43; it reads RGGVAGPETREEHREGQARRGSRG. A compositionally biased stretch (basic and acidic residues) spans 27–37; sequence ETREEHREGQA. An N-terminal domain; mediates the alkylhydroperoxide reductase activity region spans residues 66–239; sequence GLEALMSSGR…APSPPSEQGT (174 aa). C125 acts as the Cysteine sulfenic acid (-SOH) intermediate in catalysis. Residue K175 forms a Glycyl lysine isopeptide (Lys-Gly) (interchain with G-Cter in ubiquitin) linkage. Disordered regions lie at residues 221 to 251 and 272 to 291; these read DAEGSPASQAPSPPSEQGTPPSGDPLNNSGG and LLRDEGASQEEMENRFELEK. Low complexity predominate over residues 223–238; that stretch reads EGSPASQAPSPPSEQG. S249 carries the post-translational modification Phosphoserine. The tract at residues 308–480 is C-terminal domain; mediates TORC1 regulation; that stretch reads PHPDILCFVE…ALRAITRYMT (173 aa). Residues 374 to 377, T386, and E451 each bind L-leucine; that span reads TYNT.

The protein belongs to the sestrin family. As to quaternary structure, interacts with the GATOR2 complex which is composed of MIOS, SEC13, SEH1L, WDR24 and WDR59; the interaction is negatively regulated by leucine. Conveys leucine availability via direct interaction with SEH1L and WDR24 components of the GATOR2 complex. Interacts with RRAGA, RRAGB, RRAGC and RRAGD; may function as a guanine nucleotide dissociation inhibitor for RRAGs and regulate them. May interact with the TORC2 complex. Interacts with KEAP1, RBX1, SQSTM and ULK1; to regulate the degradation of KEAP1. May also associate with the complex composed of TSC1, TSC2 and the AMP-responsive protein kinase/AMPK to regulate TORC1 signaling. May interact with PRDX1. Post-translationally, phosphorylated by ULK1 at multiple sites. In terms of processing, ubiquitinated at Lys-175 by RNF167 via 'Lys-63'-linked polyubiquitination in response to leucine deprivation: ubiquitination promotes SESN2-interaction with the GATOR2 complex, leading to inhibit the TORC1 signaling pathway. Deubiquitinated at Lys-175 by STAMBPL1, promoting the TORC1 signaling pathway. Ubiquitinated by RNF186; ubiquitination mediates proteasomal degradation. In terms of tissue distribution, detected in heart, liver and skeletal muscles (at protein level).

It localises to the cytoplasm. It catalyses the reaction a hydroperoxide + L-cysteinyl-[protein] = S-hydroxy-L-cysteinyl-[protein] + an alcohol. Functionally, functions as an intracellular leucine sensor that negatively regulates the mTORC1 signaling pathway through the GATOR complex. In absence of leucine, binds the GATOR subcomplex GATOR2 and prevents mTORC1 signaling. Binding of leucine to SESN2 disrupts its interaction with GATOR2 thereby activating the TORC1 signaling pathway. This stress-inducible metabolic regulator also plays a role in protection against oxidative and genotoxic stresses. May negatively regulate protein translation in response to endoplasmic reticulum stress, via mTORC1. May positively regulate the transcription by NFE2L2 of genes involved in the response to oxidative stress by facilitating the SQSTM1-mediated autophagic degradation of KEAP1. May also mediate TP53 inhibition of TORC1 signaling upon genotoxic stress. Moreover, may prevent the accumulation of reactive oxygen species (ROS) through the alkylhydroperoxide reductase activity born by the N-terminal domain of the protein. Was originally reported to contribute to oxidative stress resistance by reducing PRDX1. However, this could not be confirmed. This chain is Sestrin-2, found in Mus musculus (Mouse).